The primary structure comprises 331 residues: MPVISKASSTTTNSSIPSCSRIGGQLCVWPGLRQLCLRKSLLYGVMWLLSMPLKTLRGARKTLKITHFCSISNMPSSLKIELVPCSKDNYAYLLHDEDTGTVGVVDPSEAAPVIEALSRKNWNLTYILNTHHHDDHIGGNAELKERYGAKVIGSAVDKDRIPGIDILLKDSDKWMFAGHEVRILDTPGHTQGHISFYFPGSATIFTGDLIYSLSCGTLSEGTPEQMLSSLQKIVSLPDDTNIYCGRENTAGNLKFALSVEPKNETLQSYATRVAHLRSQGLPSIPTTVKVEKACNPFLRISSKDIRKSLSIPDSATEAEALRRIQRARDRF.

The N-terminal 76 residues, 1 to 76, are a transit peptide targeting the mitochondrion; the sequence is MPVISKASST…HFCSISNMPS (76 aa). Zn(2+)-binding residues include His-131 and His-133. Residues Asp-135 and His-136 each contribute to the Fe cation site. The Zn(2+) site is built by His-189 and Asp-208. Asp-208 contacts Fe cation. 246–248 is a binding site for substrate; sequence REN.

Belongs to the metallo-beta-lactamase superfamily. Glyoxalase II family. Fe(2+) is required as a cofactor. The cofactor is Fe(3+). Zn(2+) serves as cofactor. In terms of tissue distribution, mainly expressed in roots, flowers and flower buds. Also detected in leaves.

The protein localises to the mitochondrion. The enzyme catalyses an S-(2-hydroxyacyl)glutathione + H2O = a 2-hydroxy carboxylate + glutathione + H(+). The protein operates within secondary metabolite metabolism; methylglyoxal degradation; (R)-lactate from methylglyoxal: step 2/2. Thiolesterase that catalyzes the hydrolysis of S-D-lactoyl-glutathione to form glutathione and D-lactic acid. The sequence is that of Hydroxyacylglutathione hydrolase 1, mitochondrial (GLX2-1) from Arabidopsis thaliana (Mouse-ear cress).